A 1284-amino-acid chain; its full sequence is Neurexin-4 (1284 aa).

Residues 1–35 (MRPPRSNTKAAFSSLQFGLLCLLLLVNNGIKSVQA) form the signal peptide. Residues 36 to 1217 (DAFTDYFSDY…LRKAYNEVDS (1182 aa)) are Extracellular-facing. In terms of domain architecture, F5/8 type C spans 47 to 185 (CNQPLMERAV…ISMRVELYGC (139 aa)). An intrachain disulfide couples cysteine 47 to cysteine 185. N-linked (GlcNAc...) asparagine glycosylation is found at asparagine 195, asparagine 329, asparagine 340, and asparagine 398. In terms of domain architecture, Laminin G-like 1 spans 220–369 (FKTAFANGVM…FTRVNTIYAC (150 aa)). Residues cysteine 333 and cysteine 369 are joined by a disulfide bond. The 138-residue stretch at 403–540 (FRTYEETGVM…CGDDVVVDAC (138 aa)) folds into the Laminin G-like 2 domain. 4 disulfide bridges follow: cysteine 507–cysteine 540, cysteine 546–cysteine 557, cysteine 551–cysteine 566, and cysteine 568–cysteine 578. Residues 542 to 579 (MIDRCNPNPCQHKGLCHQNSREFFCDCGHTGYAGAVCH) form the EGF-like 1 domain. N-linked (GlcNAc...) asparagine glycosylation occurs at asparagine 668. In terms of domain architecture, Laminin G-like 3 spans 824–962 (FRTTQENSVI…RGLYGISTGC (139 aa)). Disulfide bonds link cysteine 934–cysteine 962, cysteine 966–cysteine 977, cysteine 971–cysteine 986, and cysteine 988–cysteine 998. Positions 962–999 (CVGRCESNPCLNNGTCIERYDGYSCDCRWSAFKGPICA) constitute an EGF-like 2 domain. The N-linked (GlcNAc...) asparagine glycan is linked to asparagine 974. The region spanning 1032 to 1183 (FTTTIPKGFL…LGTQLTEDFC (152 aa)) is the Laminin G-like 4 domain. 2 N-linked (GlcNAc...) asparagine glycosylation sites follow: asparagine 1047 and asparagine 1137. A disulfide bridge links cysteine 1147 with cysteine 1183. The chain crosses the membrane as a helical span at residues 1218 to 1238 (VLLACLLVILFLLLILMFFLI). Residues 1239–1284 (GRYLHRHKGDYLTHEDQGADGADDPDDAVLHSTTGHQVRKRTEIFI) lie on the Cytoplasmic side of the membrane.

This sequence belongs to the neurexin family. In terms of assembly, forms a complex with Nrg and Cont. Forms a complex composed of septa junction proteins Nrx-IV/Nrx, Tsf2/MTf, Cont and Nrg during late embryogenesis. The C-terminal region interacts with coracle. Interacts with Patj in cis form. Found in septate junctions of epithelial and glial cells.

It localises to the cell membrane. The protein localises to the cell junction. Its subcellular location is the septate junction. In terms of biological role, seems to play a role in the formation and function of septate junctions. Septate junctions, which are the equivalent of vertebrates tight junctions, are characterized by regular arrays of transverse structures that span the intermembrane space and form a physical barrier to diffusion. Required for the blood-brain barrier formation. In Drosophila melanogaster (Fruit fly), this protein is Neurexin-4 (Nrx-IV).